Consider the following 426-residue polypeptide: Serine hydroxymethyltransferase (426 aa).

(6S)-5,6,7,8-tetrahydrofolate contacts are provided by residues leucine 118 and 122 to 124; that span reads GHL. Lysine 227 carries the post-translational modification N6-(pyridoxal phosphate)lysine. The interval 342–368 is disordered; it reads NTIPNDPKPPTQASGIRLGTPAMTTRG.

It belongs to the SHMT family. As to quaternary structure, homodimer. Pyridoxal 5'-phosphate serves as cofactor.

Its subcellular location is the cytoplasm. It catalyses the reaction (6R)-5,10-methylene-5,6,7,8-tetrahydrofolate + glycine + H2O = (6S)-5,6,7,8-tetrahydrofolate + L-serine. Its pathway is one-carbon metabolism; tetrahydrofolate interconversion. It functions in the pathway amino-acid biosynthesis; glycine biosynthesis; glycine from L-serine: step 1/1. Catalyzes the reversible interconversion of serine and glycine with tetrahydrofolate (THF) serving as the one-carbon carrier. This reaction serves as the major source of one-carbon groups required for the biosynthesis of purines, thymidylate, methionine, and other important biomolecules. Also exhibits THF-independent aldolase activity toward beta-hydroxyamino acids, producing glycine and aldehydes, via a retro-aldol mechanism. In Thermomicrobium roseum (strain ATCC 27502 / DSM 5159 / P-2), this protein is Serine hydroxymethyltransferase.